The following is a 256-amino-acid chain: tRNA (guanine-N(1)-)-methyltransferase (256 aa).

S-adenosyl-L-methionine is bound by residues Gly113 and 132–137 (VGDYVL).

It belongs to the RNA methyltransferase TrmD family. In terms of assembly, homodimer.

The protein resides in the cytoplasm. The enzyme catalyses guanosine(37) in tRNA + S-adenosyl-L-methionine = N(1)-methylguanosine(37) in tRNA + S-adenosyl-L-homocysteine + H(+). In terms of biological role, specifically methylates guanosine-37 in various tRNAs. The polypeptide is tRNA (guanine-N(1)-)-methyltransferase (Coprothermobacter proteolyticus (strain ATCC 35245 / DSM 5265 / OCM 4 / BT)).